The sequence spans 144 residues: Large ribosomal subunit protein uL11 (144 aa).

This sequence belongs to the universal ribosomal protein uL11 family. In terms of assembly, part of the ribosomal stalk of the 50S ribosomal subunit. Interacts with L10 and the large rRNA to form the base of the stalk. L10 forms an elongated spine to which L12 dimers bind in a sequential fashion forming a multimeric L10(L12)X complex. Post-translationally, one or more lysine residues are methylated.

Its function is as follows. Forms part of the ribosomal stalk which helps the ribosome interact with GTP-bound translation factors. This chain is Large ribosomal subunit protein uL11, found in Granulibacter bethesdensis (strain ATCC BAA-1260 / CGDNIH1).